A 230-amino-acid polypeptide reads, in one-letter code: uncharacterized protein (230 aa).

Residues Ser-124 and His-158 each act as charge relay system in the active site.

The protein belongs to the peptidase S51 family.

This is an uncharacterized protein from Bacillus subtilis (strain 168).